The primary structure comprises 141 residues: MPVAVEDIMRLLCSISEERKMKAAVKHSGRGALVTGAVAFVGGLVGGPPGLAVGGAVGGLLGAWMTSGQFKPVPQIIMELPPAEQQKLFNEATAIIRHLEWTDAVQLTMLVMGSEALQKQLLAMLANYVTKELRAEVQYDD.

The chain crosses the membrane as a helical span at residues 37–57; sequence AVAFVGGLVGGPPGLAVGGAV.

This sequence belongs to the C19orf12 family.

Its subcellular location is the mitochondrion. It is found in the mitochondrion membrane. It localises to the endoplasmic reticulum. The protein localises to the cytoplasm. The protein resides in the cytosol. This Bos taurus (Bovine) protein is Protein C19orf12 homolog.